The chain runs to 110 residues: Light-harvesting complex-like protein OHP1, chloroplastic (110 aa).

The transit peptide at 1 to 41 (MSSSPLSSSLFHPLSTLSTHCHGRRQNLCFNRKQQPFVVRA) directs the protein to the chloroplast. Residues 42 to 74 (AKLPEGVIVPKAQPKSQPAFLGFTQTAEIWNSR) are Stromal-facing. The chain crosses the membrane as a helical span at residues 75-95 (ACMIGLIGTFIVELILNKGIL). Residues 96-110 (ELIGVEIGKGLDLPL) lie on the Lumenal side of the membrane.

It belongs to the ELIP/psbS family. In terms of assembly, may bind chlorophyll and form dimers in the thylakoid membrane. Component of a high molecular weight complex containing OHP1, OHP2 and HCF244, and PSII core proteins D1/D2, HCF136 and HCF173. Interacts with HCF244. Forms a trimeric complex with OHP2 and HCF244 that mutually stabilizes each subunit. As to expression, mostly expressed in cotyledons and shoot apices.

It is found in the plastid. The protein resides in the chloroplast thylakoid membrane. In terms of biological role, may play a photoprotective role in the thylakoid membrane in response to light stress. Involved in photosystems I (PSI) and II (PSII) core proteins function. Forms a trimeric complex with OHP2 and HCF244 that is required to promote PSII core subunit assembly. The trimeric complex forms a transient PSII reaction center-like complex with PsbA, PsbD, PsbE, PsbF and PsbI subunits in thylakoids for early assembly of PSII as well as PSII repair. The trimeric complex is required for the recruitment of ribosomes to the psbA mRNA during PSII biogenesis and repair. Forms a heterodimer with OHP1 that binds chlorophylls and carotenoids, and that may function in the delivery of pigments to the PsbA subunit of PSII. In Arabidopsis thaliana (Mouse-ear cress), this protein is Light-harvesting complex-like protein OHP1, chloroplastic.